A 511-amino-acid chain; its full sequence is uncharacterized protein (511 aa).

The next 3 membrane-spanning stretches (helical) occupy residues 33 to 53, 59 to 79, and 97 to 117; these read IICM…LAMA, IPVQ…AHIS, and VGRF…TTSI. 3 positions are modified to phosphoserine: Ser147, Ser161, and Ser162. The segment at 157 to 180 is disordered; sequence REGNSSDEYLPPQSSRRDVSSEKP. A run of 7 helical transmembrane segments spans residues 216–236, 249–269, 297–317, 332–352, 412–432, 449–469, and 483–503; these read LWLY…AGIF, IKGA…LGAF, MVES…EHLG, SLAF…SKVV, VLWG…YIML, IITS…SYDV, and IMNI…MFLI.

This sequence to yeast YCR061W.

It localises to the endoplasmic reticulum membrane. This is an uncharacterized protein from Schizosaccharomyces pombe (strain 972 / ATCC 24843) (Fission yeast).